Reading from the N-terminus, the 419-residue chain is Tyrosine--tRNA ligase (419 aa).

Tyrosine 34 is an L-tyrosine binding site. A 'HIGH' region motif is present at residues proline 39 to histidine 48. L-tyrosine contacts are provided by tyrosine 168 and glutamine 172. The 'KMSKS' region motif lies at lysine 230–serine 234. Lysine 233 provides a ligand contact to ATP. Residues alanine 352 to tyrosine 418 enclose the S4 RNA-binding domain.

This sequence belongs to the class-I aminoacyl-tRNA synthetase family. TyrS type 1 subfamily. As to quaternary structure, homodimer.

It localises to the cytoplasm. The enzyme catalyses tRNA(Tyr) + L-tyrosine + ATP = L-tyrosyl-tRNA(Tyr) + AMP + diphosphate + H(+). Catalyzes the attachment of tyrosine to tRNA(Tyr) in a two-step reaction: tyrosine is first activated by ATP to form Tyr-AMP and then transferred to the acceptor end of tRNA(Tyr). The sequence is that of Tyrosine--tRNA ligase from Listeria monocytogenes serotype 4b (strain F2365).